A 150-amino-acid chain; its full sequence is S-protein homolog 28 (150 aa).

Asparagine 122 carries an N-linked (GlcNAc...) asparagine glycan.

It belongs to the plant self-incompatibility (S1) protein family.

The protein localises to the secreted. This Arabidopsis thaliana (Mouse-ear cress) protein is S-protein homolog 28.